The sequence spans 83 residues: U2-hexatoxin-Hi1a (83 aa).

The signal sequence occupies residues 1–23 (MRNTTFLVLNVMLLVSVALFCAA). The propeptide occupies 24-45 (DPEMEKSSFAEILDTGNPEQER). Intrachain disulfides connect Cys-47-Cys-63, Cys-54-Cys-68, Cys-62-Cys-78, and Cys-70-Cys-76.

It belongs to the neurotoxin 07 (Beta/delta-agtx) family. As to expression, expressed by the venom gland.

It is found in the secreted. In terms of biological role, inhibits sodium channels (Nav) of insects. This chain is U2-hexatoxin-Hi1a, found in Hadronyche infensa (Fraser island funnel-web spider).